A 382-amino-acid chain; its full sequence is uncharacterized protein (382 aa).

Helical transmembrane passes span 14-34 (GLLLLTLAIAVLNTLVPLWLA), 45-65 (MVSSSYFTGNLVGTLLTGYLI), 79-99 (LVFAAGCLGLGLMIGFWSWMA), 102-122 (FVAGVGCAMIWVVVESALMCS), 131-151 (LLAAYMMIYYVGTFLGQLLVS), 157-177 (LMNVLPWVTALILAGILPLLF), 204-224 (LGVNGCIISGIVLGSLYGLMP), 236-256 (NIGFWMAVLVSAGIVGQWPIG), 265-285 (LLVLRVQIFVVILGSIAMLTH), 289-309 (APALFILGAAGFTLYPVAMAW), 325-345 (ALLLSYTIGSLLGPSFTAMLM), and 349-369 (SDNLLFIMIASVSFIYLLMLL).

Belongs to the major facilitator superfamily. YcaD (TC 2.A.1.26) family.

The protein resides in the cell inner membrane. This is an uncharacterized protein from Escherichia fergusonii (strain ATCC 35469 / DSM 13698 / CCUG 18766 / IAM 14443 / JCM 21226 / LMG 7866 / NBRC 102419 / NCTC 12128 / CDC 0568-73).